Consider the following 172-residue polypeptide: Peptide deformylase-like (172 aa).

The active site involves Glu134.

The protein belongs to the polypeptide deformylase family.

The polypeptide is Peptide deformylase-like (Rhizobium meliloti (strain 1021) (Ensifer meliloti)).